Consider the following 118-residue polypeptide: Small ribosomal subunit protein uS13 (118 aa).

Positions 95 to 118 are disordered; it reads LPVRGQRTRTNARTRKGPKKLINK.

The protein belongs to the universal ribosomal protein uS13 family. Part of the 30S ribosomal subunit. Forms a loose heterodimer with protein S19. Forms two bridges to the 50S subunit in the 70S ribosome.

In terms of biological role, located at the top of the head of the 30S subunit, it contacts several helices of the 16S rRNA. In the 70S ribosome it contacts the 23S rRNA (bridge B1a) and protein L5 of the 50S subunit (bridge B1b), connecting the 2 subunits; these bridges are implicated in subunit movement. Contacts the tRNAs in the A and P-sites. The polypeptide is Small ribosomal subunit protein uS13 (Blochmanniella floridana).